The following is a 118-amino-acid chain: Immunoglobulin heavy variable 3-9 (118 aa).

Positions 1–19 are cleaved as a signal peptide; it reads MELGLSWIFLLAILKGVQC. The framework-1 stretch occupies residues 20–44; it reads EVQLVESGGGLVQPGRSLRLSCAAS. Positions 20-118 constitute an Ig-like domain; sequence EVQLVESGGG…DTALYYCAKD (99 aa). C41 and C115 are joined by a disulfide. The segment at 45 to 52 is complementarity-determining-1; sequence GFTFDDYA. Residues 53–69 are framework-2; sequence MHWVRQAPGKGLEWVSG. Positions 70-77 are complementarity-determining-2; that stretch reads ISWNSGSI. The interval 78 to 115 is framework-3; that stretch reads GYADSVKGRFTISRDNAKNSLYLQMNSLRAEDTALYYC. The segment at 116-118 is complementarity-determining-3; that stretch reads AKD.

In terms of assembly, immunoglobulins are composed of two identical heavy chains and two identical light chains; disulfide-linked.

The protein localises to the secreted. Its subcellular location is the cell membrane. V region of the variable domain of immunoglobulin heavy chains that participates in the antigen recognition. Immunoglobulins, also known as antibodies, are membrane-bound or secreted glycoproteins produced by B lymphocytes. In the recognition phase of humoral immunity, the membrane-bound immunoglobulins serve as receptors which, upon binding of a specific antigen, trigger the clonal expansion and differentiation of B lymphocytes into immunoglobulins-secreting plasma cells. Secreted immunoglobulins mediate the effector phase of humoral immunity, which results in the elimination of bound antigens. The antigen binding site is formed by the variable domain of one heavy chain, together with that of its associated light chain. Thus, each immunoglobulin has two antigen binding sites with remarkable affinity for a particular antigen. The variable domains are assembled by a process called V-(D)-J rearrangement and can then be subjected to somatic hypermutations which, after exposure to antigen and selection, allow affinity maturation for a particular antigen. The sequence is that of Immunoglobulin heavy variable 3-9 from Homo sapiens (Human).